The primary structure comprises 86 residues: Putative membrane protein insertion efficiency factor (86 aa).

Belongs to the UPF0161 family.

It localises to the cell inner membrane. In terms of biological role, could be involved in insertion of integral membrane proteins into the membrane. This is Putative membrane protein insertion efficiency factor from Cellvibrio japonicus (strain Ueda107) (Pseudomonas fluorescens subsp. cellulosa).